The primary structure comprises 380 residues: Cytochrome b (380 aa).

4 helical membrane passes run 33 to 53 (FGSLLGLCLITQILTGLFLAM), 77 to 98 (WLIRNIHANGASFFFICLYLHV), 113 to 133 (WNIGVILLLLTMMTAFVGYVL), and 178 to 198 (FFAFHFLLPFVIAGASMIHLL). Heme b-binding residues include histidine 83 and histidine 97. Histidine 182 and histidine 196 together coordinate heme b. Residue histidine 201 coordinates a ubiquinone. 4 consecutive transmembrane segments (helical) span residues 226–246 (YKDLFGFTLMLVGLTSVALFS), 288–308 (LGGVLALLFSILVLMLVPMLH), 320–340 (LSQILFWALVADMLVLTWIGG), and 347–367 (FVLIGQVASTVYFALFLIALP).

The protein belongs to the cytochrome b family. As to quaternary structure, the cytochrome bc1 complex contains 3 respiratory subunits (MT-CYB, CYC1 and UQCRFS1), 2 core proteins (UQCRC1 and UQCRC2) and probably 6 low-molecular weight proteins. Heme b serves as cofactor.

The protein localises to the mitochondrion inner membrane. Functionally, component of the ubiquinol-cytochrome c reductase complex (complex III or cytochrome b-c1 complex) that is part of the mitochondrial respiratory chain. The b-c1 complex mediates electron transfer from ubiquinol to cytochrome c. Contributes to the generation of a proton gradient across the mitochondrial membrane that is then used for ATP synthesis. The protein is Cytochrome b (mt-cyb) of Acipenser transmontanus (White sturgeon).